The primary structure comprises 862 residues: DNA mismatch repair protein MutS (862 aa).

608–615 (GPNMAGKS) contacts ATP.

It belongs to the DNA mismatch repair MutS family.

Its function is as follows. This protein is involved in the repair of mismatches in DNA. It is possible that it carries out the mismatch recognition step. This protein has a weak ATPase activity. In Borreliella afzelii (strain PKo) (Borrelia afzelii), this protein is DNA mismatch repair protein MutS.